Here is a 213-residue protein sequence, read N- to C-terminus: Probable lipid phosphate phosphatase beta (213 aa).

5 consecutive transmembrane segments (helical) span residues 30–50 (PFLPPFVLLLLEISADFRFSF), 67–87 (VPFLLGLLFDLIFVGIVKLIF), 118–138 (VFFVAASVHFFSAAAEASMTG), 158–178 (VEVVVVVWIWATVTAISRILL), and 181–201 (HYVLDVAAGAFLGIVEALFAL).

Belongs to the PA-phosphatase related phosphoesterase family.

It localises to the membrane. In Arabidopsis thaliana (Mouse-ear cress), this protein is Probable lipid phosphate phosphatase beta (LPPB).